The primary structure comprises 417 residues: FAD-dependent monooxygenase aptC (417 aa).

Residues 1-18 form the signal peptide; sequence MTLPVLIIGAGLSGLTTA. The FAD site is built by glutamate 32, alanine 43, arginine 117, aspartate 332, and glycine 345.

Belongs to the paxM FAD-dependent monooxygenase family. FAD serves as cofactor.

It catalyses the reaction 3,6,8,9-tetrahydroxy-1-oxo-3-(2-oxopropyl)-1,2,3,4-tetrahydroanthracene-2-carboxyl-[ACP] + NADPH + O2 + H(+) = 2,3,6,8,9-pentahydroxy-1-oxo-3-(2-oxopropyl)-1,2,3,4-tetrahydroanthracene-2-carboxyl-[ACP] + NADP(+) + H2O. It participates in secondary metabolite biosynthesis. Its function is as follows. FAD-dependent monooxygenase; part of the gene cluster that mediates the biosynthesis of asperthecin, an anthraquinone pigment. Polyketide synthase (PKS) aptA catalyzes the formation of the aromatic polyketide from acetyl coenzyme A and seven malonyl coenzyme A molecules. Polyketide is subsequently hydrolyzed by the action of the hydrolase aptB into endocrocin-9-anthrone. Endocrocin-9-anthrone is then oxidized into endocrocin by the monooxygenase aptC. Endocrocin is likely to decarboxylate spontaneously to form emodin which explains why there is no decarboxylase in the asperthecin biosynthesis cluster. Finally, aptC or another endogenous oxygenase catalyzes additional oxidation steps to form asperthecin. The chain is FAD-dependent monooxygenase aptC from Emericella nidulans (strain FGSC A4 / ATCC 38163 / CBS 112.46 / NRRL 194 / M139) (Aspergillus nidulans).